Here is a 271-residue protein sequence, read N- to C-terminus: Ribosomal RNA small subunit methyltransferase A (271 aa).

Positions 18, 20, 45, 66, 91, and 112 each coordinate S-adenosyl-L-methionine.

The protein belongs to the class I-like SAM-binding methyltransferase superfamily. rRNA adenine N(6)-methyltransferase family. RsmA subfamily.

It is found in the cytoplasm. It carries out the reaction adenosine(1518)/adenosine(1519) in 16S rRNA + 4 S-adenosyl-L-methionine = N(6)-dimethyladenosine(1518)/N(6)-dimethyladenosine(1519) in 16S rRNA + 4 S-adenosyl-L-homocysteine + 4 H(+). Functionally, specifically dimethylates two adjacent adenosines (A1518 and A1519) in the loop of a conserved hairpin near the 3'-end of 16S rRNA in the 30S particle. May play a critical role in biogenesis of 30S subunits. This is Ribosomal RNA small subunit methyltransferase A from Vibrio atlanticus (strain LGP32) (Vibrio splendidus (strain Mel32)).